The primary structure comprises 334 residues: N-acetyl-gamma-glutamyl-phosphate reductase (334 aa).

The active site involves Cys-142.

This sequence belongs to the NAGSA dehydrogenase family. Type 1 subfamily.

The protein localises to the cytoplasm. The catalysed reaction is N-acetyl-L-glutamate 5-semialdehyde + phosphate + NADP(+) = N-acetyl-L-glutamyl 5-phosphate + NADPH + H(+). The protein operates within amino-acid biosynthesis; L-arginine biosynthesis; N(2)-acetyl-L-ornithine from L-glutamate: step 3/4. Functionally, catalyzes the NADPH-dependent reduction of N-acetyl-5-glutamyl phosphate to yield N-acetyl-L-glutamate 5-semialdehyde. This chain is N-acetyl-gamma-glutamyl-phosphate reductase, found in Pelodictyon phaeoclathratiforme (strain DSM 5477 / BU-1).